A 255-amino-acid polypeptide reads, in one-letter code: Cytochrome c oxidase subunit 2 (255 aa).

Over 1-42 (MKFFFFSFINYKVLNDAARPWQIGFQDPATPIMEGIVNLHHD) the chain is Mitochondrial intermembrane. Residues 43 to 63 (IIFFLIIIIIFVSWILFRTLF) traverse the membrane as a helical segment. Residues 64–83 (LFNSKTNPVAYNFSHGTFIE) are Mitochondrial matrix-facing. A helical membrane pass occupies residues 84–104 (LLWTLTPSLVLIGIAVPSFAL). Residues 105 to 255 (LYSIDEIIDP…IRWVQNKILD (151 aa)) lie on the Mitochondrial intermembrane side of the membrane. Cu cation-binding residues include His187, Cys222, Glu224, Cys226, His230, and Met233. Mg(2+) is bound at residue Glu224.

This sequence belongs to the cytochrome c oxidase subunit 2 family. As to quaternary structure, component of the cytochrome c oxidase (complex IV, CIV), a multisubunit enzyme composed of a catalytic core of 3 subunits and several supernumerary subunits. The complex exists as a monomer or a dimer and forms supercomplexes (SCs) in the inner mitochondrial membrane with ubiquinol-cytochrome c oxidoreductase (cytochrome b-c1 complex, complex III, CIII). Requires Cu cation as cofactor.

It localises to the mitochondrion inner membrane. It carries out the reaction 4 Fe(II)-[cytochrome c] + O2 + 8 H(+)(in) = 4 Fe(III)-[cytochrome c] + 2 H2O + 4 H(+)(out). Component of the cytochrome c oxidase, the last enzyme in the mitochondrial electron transport chain which drives oxidative phosphorylation. The respiratory chain contains 3 multisubunit complexes succinate dehydrogenase (complex II, CII), ubiquinol-cytochrome c oxidoreductase (cytochrome b-c1 complex, complex III, CIII) and cytochrome c oxidase (complex IV, CIV), that cooperate to transfer electrons derived from NADH and succinate to molecular oxygen, creating an electrochemical gradient over the inner membrane that drives transmembrane transport and the ATP synthase. Cytochrome c oxidase is the component of the respiratory chain that catalyzes the reduction of oxygen to water. Electrons originating from reduced cytochrome c in the intermembrane space (IMS) are transferred via the dinuclear copper A center (CU(A)) of subunit 2 and heme A of subunit 1 to the active site in subunit 1, a binuclear center (BNC) formed by heme A3 and copper B (CU(B)). The BNC reduces molecular oxygen to 2 water molecules using 4 electrons from cytochrome c in the IMS and 4 protons from the mitochondrial matrix. The sequence is that of Cytochrome c oxidase subunit 2 (COX2) from Cyanidium caldarium (Red alga).